Consider the following 406-residue polypeptide: Arginine deiminase (406 aa).

Cys396 acts as the Amidino-cysteine intermediate in catalysis.

This sequence belongs to the arginine deiminase family.

It is found in the cytoplasm. The catalysed reaction is L-arginine + H2O = L-citrulline + NH4(+). The protein operates within amino-acid degradation; L-arginine degradation via ADI pathway; carbamoyl phosphate from L-arginine: step 1/2. This chain is Arginine deiminase, found in Salmonella typhimurium (strain LT2 / SGSC1412 / ATCC 700720).